The sequence spans 296 residues: MGSTLFKTIALIGKHKNPDIMTPLLNLAEYLTDRGTSVVLDDLTAAHIGKNQYPVVALEEIGRQADLAIVLGGDGTMLNIARTLVPFSVPLIGINQGRLGFLTDLTVDTMYATLNDMLAGQFIVENRMLLTTEVTRHGESVFKELAFNDVVLHRGISSGMIELEVHINGEYVYSLRSDGLIIATPTGSTAYALSSGGPILHPGLNLMILVPVCPHTLSNRPIVIGADAVIEIKIHYTTETKIYTDSHSWFDLGEHDRVLVRRCPETIKLLHPVHHSYYRMLREKLGWSSILQKNSR.

Catalysis depends on aspartate 74, which acts as the Proton acceptor. Residues 74–75, 148–149, arginine 176, aspartate 178, and 189–194 contribute to the NAD(+) site; these read DG, ND, and TAYALS.

Belongs to the NAD kinase family. A divalent metal cation serves as cofactor.

The protein resides in the cytoplasm. The catalysed reaction is NAD(+) + ATP = ADP + NADP(+) + H(+). Functionally, involved in the regulation of the intracellular balance of NAD and NADP, and is a key enzyme in the biosynthesis of NADP. Catalyzes specifically the phosphorylation on 2'-hydroxyl of the adenosine moiety of NAD to yield NADP. The polypeptide is NAD kinase (Nitrosomonas eutropha (strain DSM 101675 / C91 / Nm57)).